The chain runs to 190 residues: Peptidyl-tRNA hydrolase (190 aa).

Tyrosine 14 serves as a coordination point for tRNA. Residue histidine 19 is the Proton acceptor of the active site. The tRNA site is built by tyrosine 64, asparagine 66, and asparagine 113.

It belongs to the PTH family. In terms of assembly, monomer.

It is found in the cytoplasm. It catalyses the reaction an N-acyl-L-alpha-aminoacyl-tRNA + H2O = an N-acyl-L-amino acid + a tRNA + H(+). Its function is as follows. Hydrolyzes ribosome-free peptidyl-tRNAs (with 1 or more amino acids incorporated), which drop off the ribosome during protein synthesis, or as a result of ribosome stalling. Catalyzes the release of premature peptidyl moieties from peptidyl-tRNA molecules trapped in stalled 50S ribosomal subunits, and thus maintains levels of free tRNAs and 50S ribosomes. The sequence is that of Peptidyl-tRNA hydrolase from Gemmatimonas aurantiaca (strain DSM 14586 / JCM 11422 / NBRC 100505 / T-27).